Consider the following 268-residue polypeptide: 4-diphosphocytidyl-2-C-methyl-D-erythritol kinase (268 aa).

Lys10 is an active-site residue. 101–111 (PTQAGLGGGST) lines the ATP pocket. The active site involves Asp143.

The protein belongs to the GHMP kinase family. IspE subfamily.

The catalysed reaction is 4-CDP-2-C-methyl-D-erythritol + ATP = 4-CDP-2-C-methyl-D-erythritol 2-phosphate + ADP + H(+). It participates in isoprenoid biosynthesis; isopentenyl diphosphate biosynthesis via DXP pathway; isopentenyl diphosphate from 1-deoxy-D-xylulose 5-phosphate: step 3/6. Its function is as follows. Catalyzes the phosphorylation of the position 2 hydroxy group of 4-diphosphocytidyl-2C-methyl-D-erythritol. This chain is 4-diphosphocytidyl-2-C-methyl-D-erythritol kinase, found in Helicobacter acinonychis (strain Sheeba).